Consider the following 182-residue polypeptide: Protein LURP-one-related 7 (182 aa).

The protein belongs to the LOR family.

Might be related to the phospholipid scramblase and tubby-like superfamily of membrane tethered transcription factors. This chain is Protein LURP-one-related 7, found in Arabidopsis thaliana (Mouse-ear cress).